Consider the following 292-residue polypeptide: Mycothiol acetyltransferase (292 aa).

2 consecutive N-acetyltransferase domains span residues 13 to 168 (ALDR…KWLQ) and 159 to 292 (KSVA…VYEK). A 1D-myo-inositol 2-(L-cysteinylamino)-2-deoxy-alpha-D-glucopyranoside-binding site is contributed by Glu40. 77–79 (LAV) lines the acetyl-CoA pocket. 1D-myo-inositol 2-(L-cysteinylamino)-2-deoxy-alpha-D-glucopyranoside is bound by residues Glu179, Lys218, and Glu226. Acetyl-CoA contacts are provided by residues 230–232 (VGL) and 237–243 (RGRGLGD). A 1D-myo-inositol 2-(L-cysteinylamino)-2-deoxy-alpha-D-glucopyranoside-binding site is contributed by Tyr264.

Belongs to the acetyltransferase family. MshD subfamily. As to quaternary structure, monomer.

The catalysed reaction is 1D-myo-inositol 2-(L-cysteinylamino)-2-deoxy-alpha-D-glucopyranoside + acetyl-CoA = mycothiol + CoA + H(+). Functionally, catalyzes the transfer of acetyl from acetyl-CoA to desacetylmycothiol (Cys-GlcN-Ins) to form mycothiol. The chain is Mycothiol acetyltransferase from Corynebacterium glutamicum (strain ATCC 13032 / DSM 20300 / JCM 1318 / BCRC 11384 / CCUG 27702 / LMG 3730 / NBRC 12168 / NCIMB 10025 / NRRL B-2784 / 534).